Here is a 375-residue protein sequence, read N- to C-terminus: Esterase AN6793 (375 aa).

A disordered region spans residues 138 to 158 (RHPQPGLDPGHGHRHKRMPPL).

It belongs to the sidJ hydrolase family. In terms of assembly, homodimer.

Its pathway is secondary metabolite biosynthesis. Functionally, esterase; part of a cluster that mediates the biosynthesis of a yet undetermined secondary metabolite. With the HR-PKS AN6791, produces a pathway intermediate compound with molecular weight 258. In Emericella nidulans (strain FGSC A4 / ATCC 38163 / CBS 112.46 / NRRL 194 / M139) (Aspergillus nidulans), this protein is Esterase AN6793.